The sequence spans 96 residues: UPF0213 protein BCE_0033 (96 aa).

The GIY-YIG domain maps to 4–79 (NKHCFYVVEC…KQLNRKQKEE (76 aa)).

The protein belongs to the UPF0213 family.

The sequence is that of UPF0213 protein BCE_0033 from Bacillus cereus (strain ATCC 10987 / NRS 248).